Reading from the N-terminus, the 642-residue chain is tRNA uridine 5-carboxymethylaminomethyl modification enzyme MnmG (642 aa).

Residue 24-29 (GGGHAG) coordinates FAD. 284-298 (GPRYCPSIEDKIHRF) contacts NAD(+).

The protein belongs to the MnmG family. As to quaternary structure, homodimer. Heterotetramer of two MnmE and two MnmG subunits. The cofactor is FAD.

Its subcellular location is the cytoplasm. Functionally, NAD-binding protein involved in the addition of a carboxymethylaminomethyl (cmnm) group at the wobble position (U34) of certain tRNAs, forming tRNA-cmnm(5)s(2)U34. This Psychrobacter sp. (strain PRwf-1) protein is tRNA uridine 5-carboxymethylaminomethyl modification enzyme MnmG.